The primary structure comprises 118 residues: Large ribosomal subunit protein bL19 (118 aa).

The protein belongs to the bacterial ribosomal protein bL19 family.

In terms of biological role, this protein is located at the 30S-50S ribosomal subunit interface and may play a role in the structure and function of the aminoacyl-tRNA binding site. This chain is Large ribosomal subunit protein bL19, found in Buchnera aphidicola subsp. Baizongia pistaciae (strain Bp).